Reading from the N-terminus, the 317-residue chain is Apolipoprotein E (317 aa).

A signal peptide spans 1-18; sequence MKVLWAALLVTFLAGCQA. Tandem repeats lie at residues 80–101, 102–123, 124–145, 146–167, 168–189, 190–211, 212–233, and 234–255. The tract at residues 80 to 255 is 8 X 22 AA approximate tandem repeats; that stretch reads TLMDETMKEL…RLDEVKEQVA (176 aa). Methionine sulfoxide is present on Met143. Residue Ser147 is modified to Phosphoserine. Residues 158 to 168 are LDL and other lipoprotein receptors binding; the sequence is HLRKLRKRLLR. Position 162 to 165 (162 to 165) interacts with heparin; it reads LRKR. The tract at residues 210–290 is lipid-binding and lipoprotein association; the sequence is AATVGSLAGQ…SWFEPLVEDM (81 aa). Residue Thr212 is glycosylated (O-linked (GalNAc...) threonine). 229–236 provides a ligand contact to heparin; it reads GERLRARM. Positions 266–317 are homooligomerization; it reads QQISLQAEAFQARLKSWFEPLVEDMQRQWAGLVEKVQAAVGASTAPVPSDNH. Positions 278–290 are specificity for association with VLDL; that stretch reads RLKSWFEPLVEDM.

This sequence belongs to the apolipoprotein A1/A4/E family. In terms of assembly, homotetramer. May interact with ABCA1; functionally associated with ABCA1 in the biogenesis of HDLs. May interact with APP/A4 amyloid-beta peptide; the interaction is extremely stable in vitro but its physiological significance is unclear. May interact with MAPT. May interact with MAP2. In the cerebrospinal fluid, interacts with secreted SORL1. Interacts with PMEL; this allows the loading of PMEL luminal fragment on ILVs to induce fibril nucleation. APOE exists as multiple glycosylated and sialylated glycoforms within cells and in plasma. The extent of glycosylation and sialylation are tissue and context specific. Post-translationally, glycated in plasma VLDL. In terms of processing, phosphorylated by FAM20C in the extracellular medium.

Its subcellular location is the secreted. It is found in the extracellular space. The protein resides in the extracellular matrix. It localises to the extracellular vesicle. The protein localises to the endosome. Its subcellular location is the multivesicular body. APOE is an apolipoprotein, a protein associating with lipid particles, that mainly functions in lipoprotein-mediated lipid transport between organs via the plasma and interstitial fluids. APOE is a core component of plasma lipoproteins and is involved in their production, conversion and clearance. Apolipoproteins are amphipathic molecules that interact both with lipids of the lipoprotein particle core and the aqueous environment of the plasma. As such, APOE associates with chylomicrons, chylomicron remnants, very low density lipoproteins (VLDL) and intermediate density lipoproteins (IDL) but shows a preferential binding to high-density lipoproteins (HDL). It also binds a wide range of cellular receptors including the LDL receptor/LDLR, the LDL receptor-related proteins LRP1, LRP2 and LRP8 and the very low-density lipoprotein receptor/VLDLR that mediate the cellular uptake of the APOE-containing lipoprotein particles. Finally, APOE also has a heparin-binding activity and binds heparan-sulfate proteoglycans on the surface of cells, a property that supports the capture and the receptor-mediated uptake of APOE-containing lipoproteins by cells. A main function of APOE is to mediate lipoprotein clearance through the uptake of chylomicrons, VLDLs, and HDLs by hepatocytes. APOE is also involved in the biosynthesis by the liver of VLDLs as well as their uptake by peripheral tissues ensuring the delivery of triglycerides and energy storage in muscle, heart and adipose tissues. By participating in the lipoprotein-mediated distribution of lipids among tissues, APOE plays a critical role in plasma and tissues lipid homeostasis. APOE is also involved in two steps of reverse cholesterol transport, the HDLs-mediated transport of cholesterol from peripheral tissues to the liver, and thereby plays an important role in cholesterol homeostasis. First, it is functionally associated with ABCA1 in the biogenesis of HDLs in tissues. Second, it is enriched in circulating HDLs and mediates their uptake by hepatocytes. APOE also plays an important role in lipid transport in the central nervous system, regulating neuron survival and sprouting. The polypeptide is Apolipoprotein E (APOE) (Rhinopithecus roxellana (Golden snub-nosed monkey)).